The sequence spans 628 residues: DNA ligase (628 aa).

NAD(+)-binding positions include 36-40, 85-86, and glutamate 117; these read DVEYD and SL. Lysine 119 acts as the N6-AMP-lysine intermediate in catalysis. 4 residues coordinate NAD(+): arginine 140, glutamate 174, lysine 309, and lysine 333. Zn(2+)-binding residues include cysteine 427, cysteine 430, cysteine 446, and cysteine 452.

This sequence belongs to the NAD-dependent DNA ligase family. LigA subfamily. Requires Mg(2+) as cofactor. It depends on Mn(2+) as a cofactor.

The enzyme catalyses NAD(+) + (deoxyribonucleotide)n-3'-hydroxyl + 5'-phospho-(deoxyribonucleotide)m = (deoxyribonucleotide)n+m + AMP + beta-nicotinamide D-nucleotide.. In terms of biological role, DNA ligase that catalyzes the formation of phosphodiester linkages between 5'-phosphoryl and 3'-hydroxyl groups in double-stranded DNA using NAD as a coenzyme and as the energy source for the reaction. It is essential for DNA replication and repair of damaged DNA. This is DNA ligase from Tropheryma whipplei (strain Twist) (Whipple's bacillus).